The chain runs to 212 residues: ER lumen protein-retaining receptor 1 (212 aa).

Residues 1 to 4 (MNLF) lie on the Lumenal side of the membrane. The helical transmembrane segment at 5-24 (RFLGDLSHLLAIILLLLKIW) threads the bilayer. Topologically, residues 25-32 (KSRSCAGI) are cytoplasmic. A helical membrane pass occupies residues 33–52 (SGKSQVLFAVVFTARYLDLF). Residues 47–48 (RY) are interaction with the K-D-E-L motif on target proteins. At 53 to 58 (TNYISL) the chain is on the lumenal side. A helical transmembrane segment spans residues 59–79 (YNTCMKVVYIACSFTTVWMIY). At 80–92 (SKFKATYDGNHDT) the chain is on the cytoplasmic side. The helical transmembrane segment at 93–110 (FRVEFLVVPTAVLAFLVN) threads the bilayer. The Lumenal portion of the chain corresponds to 111 to 116 (HDFTPL). The helical transmembrane segment at 117–135 (EILWTFSIYLESVAILPQL) threads the bilayer. Residues 136–149 (FMVSKTGEAETITS) are Cytoplasmic-facing. The chain crosses the membrane as a helical span at residues 150–168 (HYLFALGVYRTLYLFNWIW). The segment at 159 to 169 (RTLYLFNWIWR) is interaction with the K-D-E-L motif on target proteins. Residues 169-178 (RYHFEGFFDL) lie on the Lumenal side of the membrane. The chain crosses the membrane as a helical span at residues 179-199 (IAIVAGLVQTVLYCDFFYLYI). Residues 200-212 (TKVLKGKKLSLPA) are Cytoplasmic-facing. The segment at 204 to 207 (KGKK) is important for recycling of cargo proteins with the sequence motif K-D-E-L from the Golgi to the endoplasmic reticulum. The residue at position 209 (S209) is a Phosphoserine; by PKA.

It belongs to the ERD2 family. Upon ligand binding the receptor oligomerizes and interacts with components of the transport machinery such as ARFGAP1 and ARF1. Post-translationally, phosphorylation by PKA at Ser-209 is required for endoplasmic reticulum retention function.

It localises to the golgi apparatus membrane. The protein localises to the cytoplasmic vesicle. The protein resides in the COPI-coated vesicle membrane. It is found in the endoplasmic reticulum membrane. Its subcellular location is the endoplasmic reticulum-Golgi intermediate compartment membrane. Receptor for the C-terminal sequence motif K-D-E-L that is present on endoplasmic reticulum resident proteins and that mediates their recycling from the Golgi back to the endoplasmic reticulum. The sequence is that of ER lumen protein-retaining receptor 1 (Kdelr1) from Rattus norvegicus (Rat).